The following is a 902-amino-acid chain: DNA mismatch repair protein MutS (902 aa).

654-661 contributes to the ATP binding site; sequence GPNMGGKS.

Belongs to the DNA mismatch repair MutS family.

Its function is as follows. This protein is involved in the repair of mismatches in DNA. It is possible that it carries out the mismatch recognition step. This protein has a weak ATPase activity. This Xanthomonas axonopodis pv. citri (strain 306) protein is DNA mismatch repair protein MutS.